A 257-amino-acid polypeptide reads, in one-letter code: Imidazole glycerol phosphate synthase subunit HisF (257 aa).

Catalysis depends on residues Asp11 and Asp130.

This sequence belongs to the HisA/HisF family. Heterodimer of HisH and HisF.

Its subcellular location is the cytoplasm. The enzyme catalyses 5-[(5-phospho-1-deoxy-D-ribulos-1-ylimino)methylamino]-1-(5-phospho-beta-D-ribosyl)imidazole-4-carboxamide + L-glutamine = D-erythro-1-(imidazol-4-yl)glycerol 3-phosphate + 5-amino-1-(5-phospho-beta-D-ribosyl)imidazole-4-carboxamide + L-glutamate + H(+). The protein operates within amino-acid biosynthesis; L-histidine biosynthesis; L-histidine from 5-phospho-alpha-D-ribose 1-diphosphate: step 5/9. Functionally, IGPS catalyzes the conversion of PRFAR and glutamine to IGP, AICAR and glutamate. The HisF subunit catalyzes the cyclization activity that produces IGP and AICAR from PRFAR using the ammonia provided by the HisH subunit. The chain is Imidazole glycerol phosphate synthase subunit HisF from Bradyrhizobium diazoefficiens (strain JCM 10833 / BCRC 13528 / IAM 13628 / NBRC 14792 / USDA 110).